We begin with the raw amino-acid sequence, 360 residues long: Archaemetzincin-2 (360 aa).

His254 lines the Zn(2+) pocket. Glu255 serves as the catalytic Proton acceptor. 6 residues coordinate Zn(2+): His258, His264, Cys265, Cys270, Cys289, and Cys292.

Belongs to the peptidase M54 family. Requires Zn(2+) as cofactor.

In terms of biological role, probable zinc metalloprotease. This Pongo abelii (Sumatran orangutan) protein is Archaemetzincin-2 (AMZ2).